The chain runs to 112 residues: 2Fe-2S ferredoxin (112 aa).

The region spanning 1–104 (MPQIVILPHA…DLVVEIPKYT (104 aa)) is the 2Fe-2S ferredoxin-type domain. 4 residues coordinate [2Fe-2S] cluster: cysteine 42, cysteine 48, cysteine 51, and cysteine 87.

The protein belongs to the adrenodoxin/putidaredoxin family. The cofactor is [2Fe-2S] cluster.

Functionally, ferredoxin are iron-sulfur proteins that transfer electrons in a wide variety of metabolic reactions. The polypeptide is 2Fe-2S ferredoxin (fdx) (Pseudomonas aeruginosa (strain ATCC 15692 / DSM 22644 / CIP 104116 / JCM 14847 / LMG 12228 / 1C / PRS 101 / PAO1)).